Reading from the N-terminus, the 150-residue chain is Large ribosomal subunit protein bL9 (150 aa).

This sequence belongs to the bacterial ribosomal protein bL9 family.

Its function is as follows. Binds to the 23S rRNA. This chain is Large ribosomal subunit protein bL9, found in Baumannia cicadellinicola subsp. Homalodisca coagulata.